We begin with the raw amino-acid sequence, 125 residues long: Small ribosomal subunit protein uS12 (125 aa).

D89 carries the post-translational modification 3-methylthioaspartic acid.

Belongs to the universal ribosomal protein uS12 family. In terms of assembly, part of the 30S ribosomal subunit. Contacts proteins S8 and S17. May interact with IF1 in the 30S initiation complex.

Functionally, with S4 and S5 plays an important role in translational accuracy. Its function is as follows. Interacts with and stabilizes bases of the 16S rRNA that are involved in tRNA selection in the A site and with the mRNA backbone. Located at the interface of the 30S and 50S subunits, it traverses the body of the 30S subunit contacting proteins on the other side and probably holding the rRNA structure together. The combined cluster of proteins S8, S12 and S17 appears to hold together the shoulder and platform of the 30S subunit. This is Small ribosomal subunit protein uS12 from Ralstonia nicotianae (strain ATCC BAA-1114 / GMI1000) (Ralstonia solanacearum).